The chain runs to 485 residues: Glutamyl-tRNA(Gln) amidotransferase subunit A (485 aa).

Catalysis depends on charge relay system residues Lys-79 and Ser-154. Ser-178 serves as the catalytic Acyl-ester intermediate.

It belongs to the amidase family. GatA subfamily. Heterotrimer of A, B and C subunits.

It catalyses the reaction L-glutamyl-tRNA(Gln) + L-glutamine + ATP + H2O = L-glutaminyl-tRNA(Gln) + L-glutamate + ADP + phosphate + H(+). Functionally, allows the formation of correctly charged Gln-tRNA(Gln) through the transamidation of misacylated Glu-tRNA(Gln) in organisms which lack glutaminyl-tRNA synthetase. The reaction takes place in the presence of glutamine and ATP through an activated gamma-phospho-Glu-tRNA(Gln). This is Glutamyl-tRNA(Gln) amidotransferase subunit A from Clostridium botulinum (strain Langeland / NCTC 10281 / Type F).